Here is a 249-residue protein sequence, read N- to C-terminus: Ubiquinone/menaquinone biosynthesis C-methyltransferase UbiE (249 aa).

Residues T72, D93, and 121 to 122 (DA) each bind S-adenosyl-L-methionine.

This sequence belongs to the class I-like SAM-binding methyltransferase superfamily. MenG/UbiE family.

The enzyme catalyses a 2-demethylmenaquinol + S-adenosyl-L-methionine = a menaquinol + S-adenosyl-L-homocysteine + H(+). The catalysed reaction is a 2-methoxy-6-(all-trans-polyprenyl)benzene-1,4-diol + S-adenosyl-L-methionine = a 5-methoxy-2-methyl-3-(all-trans-polyprenyl)benzene-1,4-diol + S-adenosyl-L-homocysteine + H(+). Its pathway is quinol/quinone metabolism; menaquinone biosynthesis; menaquinol from 1,4-dihydroxy-2-naphthoate: step 2/2. It participates in cofactor biosynthesis; ubiquinone biosynthesis. Methyltransferase required for the conversion of demethylmenaquinol (DMKH2) to menaquinol (MKH2) and the conversion of 2-polyprenyl-6-methoxy-1,4-benzoquinol (DDMQH2) to 2-polyprenyl-3-methyl-6-methoxy-1,4-benzoquinol (DMQH2). The sequence is that of Ubiquinone/menaquinone biosynthesis C-methyltransferase UbiE from Saccharophagus degradans (strain 2-40 / ATCC 43961 / DSM 17024).